We begin with the raw amino-acid sequence, 327 residues long: Protein-L-isoaspartate O-methyltransferase (327 aa).

Disordered stretches follow at residues 1–38 (MSGE…DAAR) and 62–105 (PRAA…KSAT). Over residues 14 to 29 (EDLKREPRKPEGRAAE) the composition is skewed to basic and acidic residues. Low complexity predominate over residues 62–77 (PRAAGASGSGVPVAKP). The span at 92 to 105 (APSSGVKNGDKSAT) shows a compositional bias: polar residues. Residue serine 175 is part of the active site.

It belongs to the methyltransferase superfamily. L-isoaspartyl/D-aspartyl protein methyltransferase family.

It is found in the cytoplasm. The catalysed reaction is [protein]-L-isoaspartate + S-adenosyl-L-methionine = [protein]-L-isoaspartate alpha-methyl ester + S-adenosyl-L-homocysteine. In terms of biological role, catalyzes the methyl esterification of L-isoaspartyl residues in peptides and proteins that result from spontaneous decomposition of normal L-aspartyl and L-asparaginyl residues. It plays a role in the repair and/or degradation of damaged proteins. The polypeptide is Protein-L-isoaspartate O-methyltransferase (Burkholderia thailandensis (strain ATCC 700388 / DSM 13276 / CCUG 48851 / CIP 106301 / E264)).